Reading from the N-terminus, the 619-residue chain is Phosphomethylpyrimidine synthase (619 aa).

Over residues 93 to 104 (IKPEDNGLKGPD) the composition is skewed to basic and acidic residues. Positions 93–114 (IKPEDNGLKGPDRSGGVTPFPN) are disordered. Substrate is bound by residues Asn217, Met246, Tyr275, His311, 331–333 (SRG), 372–375 (DGLR), and Glu411. His415 contributes to the Zn(2+) binding site. Tyr438 provides a ligand contact to substrate. His479 serves as a coordination point for Zn(2+). The [4Fe-4S] cluster site is built by Cys559, Cys562, and Cys567.

Belongs to the ThiC family. As to quaternary structure, homodimer. [4Fe-4S] cluster is required as a cofactor.

It catalyses the reaction 5-amino-1-(5-phospho-beta-D-ribosyl)imidazole + S-adenosyl-L-methionine = 4-amino-2-methyl-5-(phosphooxymethyl)pyrimidine + CO + 5'-deoxyadenosine + formate + L-methionine + 3 H(+). Its pathway is cofactor biosynthesis; thiamine diphosphate biosynthesis. Its function is as follows. Catalyzes the synthesis of the hydroxymethylpyrimidine phosphate (HMP-P) moiety of thiamine from aminoimidazole ribotide (AIR) in a radical S-adenosyl-L-methionine (SAM)-dependent reaction. The sequence is that of Phosphomethylpyrimidine synthase from Rhizorhabdus wittichii (strain DSM 6014 / CCUG 31198 / JCM 15750 / NBRC 105917 / EY 4224 / RW1) (Sphingomonas wittichii).